Consider the following 283-residue polypeptide: Undecaprenyl-diphosphatase (283 aa).

6 helical membrane-spanning segments follow: residues 47–67 (PGLS…IAYF), 94–114 (LGIA…CIKL), 127–147 (VPAI…AELL), 197–217 (AARF…LVEL), 227–247 (GGVL…WLAI), and 261–281 (IFVV…SGSA).

It belongs to the UppP family.

The protein resides in the cell inner membrane. The catalysed reaction is di-trans,octa-cis-undecaprenyl diphosphate + H2O = di-trans,octa-cis-undecaprenyl phosphate + phosphate + H(+). In terms of biological role, catalyzes the dephosphorylation of undecaprenyl diphosphate (UPP). Confers resistance to bacitracin. The protein is Undecaprenyl-diphosphatase of Synechococcus sp. (strain CC9311).